The chain runs to 101 residues: Early E3A 11.6 kDa glycoprotein (101 aa).

N-linked (GlcNAc...) asparagine; by host glycosylation is present at Asn-14. A helical transmembrane segment spans residues 41 to 62 (MWWFSIALMFVCLIIMWLICCL).

It belongs to the adenoviridae E3A-1 family. N-glycosylated and probably also O-glycosylated.

It localises to the host nucleus membrane. This is Early E3A 11.6 kDa glycoprotein from Human adenovirus C serotype 6 (HAdV-6).